The following is a 540-amino-acid chain: Light-independent protochlorophyllide reductase subunit B (540 aa).

D36 contacts [4Fe-4S] cluster. The active-site Proton donor is D292. Residue 428–429 coordinates substrate; sequence GL. The tract at residues 451 to 490 is disordered; that stretch reads SNVASGVEPSTPSVSSEVSASSSASPEASAPTPSPDGDMV. Residues 457-481 are compositionally biased toward low complexity; that stretch reads VEPSTPSVSSEVSASSSASPEASAP.

Belongs to the ChlB/BchB/BchZ family. Protochlorophyllide reductase is composed of three subunits; BchL, BchN and BchB. Forms a heterotetramer of two BchB and two BchN subunits. [4Fe-4S] cluster is required as a cofactor.

It catalyses the reaction chlorophyllide a + oxidized 2[4Fe-4S]-[ferredoxin] + 2 ADP + 2 phosphate = protochlorophyllide a + reduced 2[4Fe-4S]-[ferredoxin] + 2 ATP + 2 H2O. It participates in porphyrin-containing compound metabolism; bacteriochlorophyll biosynthesis (light-independent). Component of the dark-operative protochlorophyllide reductase (DPOR) that uses Mg-ATP and reduced ferredoxin to reduce ring D of protochlorophyllide (Pchlide) to form chlorophyllide a (Chlide). This reaction is light-independent. The NB-protein (BchN-BchB) is the catalytic component of the complex. This chain is Light-independent protochlorophyllide reductase subunit B, found in Chlorobium chlorochromatii (strain CaD3).